A 538-amino-acid polypeptide reads, in one-letter code: Cytochrome P450 734A4 (538 aa).

The helical transmembrane segment at 5 to 27 (VAVAAAVLLLLHVAARVADAVWW) threads the bilayer. A heme-binding site is contributed by cysteine 480.

The protein belongs to the cytochrome P450 family. Heme is required as a cofactor. As to expression, expressed in roots, shoot apex, leaf sheaths, leaf blades, internodes and panicles.

It localises to the membrane. Cytochrome P450 involved in brassinosteroids (BRs) inactivation and regulation of BRs homeostasis. Is a multifunctional and multisubstrate enzyme that controls the endogenous bioactive BR content both by direct inactivation of castasterone (CS) and by decreasing the levels of BR precursors. Catalyzes the oxidation of carbon 22 hydroxylated BR intermediates to produce C26 oxidized metabolites. The polypeptide is Cytochrome P450 734A4 (CYP734A4) (Oryza sativa subsp. japonica (Rice)).